Reading from the N-terminus, the 802-residue chain is Bifunctional purine biosynthetic protein ADE5,7 (802 aa).

Positions 1–450 (MLNILVLGNG…QNSESSKVAI (450 aa)) are GARS. The 217-residue stretch at 114–330 (KRFMSKHNIP…LAQVFLAAAE (217 aa)) folds into the ATP-grasp domain. 141–203 (QAHTDKAFVI…EQFLEGDEIS (63 aa)) is an ATP binding site. Residues Glu298 and Asn300 each coordinate Mg(2+). The segment at 451–802 (TYADSGVSVD…CVIENGTKLY (352 aa)) is AIRS. Ser455 and Ser458 each carry phosphoserine.

This sequence in the N-terminal section; belongs to the GARS family. It in the C-terminal section; belongs to the AIR synthase family. It depends on Mg(2+) as a cofactor. The cofactor is Mn(2+).

It localises to the cytoplasm. The enzyme catalyses 5-phospho-beta-D-ribosylamine + glycine + ATP = N(1)-(5-phospho-beta-D-ribosyl)glycinamide + ADP + phosphate + H(+). It carries out the reaction 2-formamido-N(1)-(5-O-phospho-beta-D-ribosyl)acetamidine + ATP = 5-amino-1-(5-phospho-beta-D-ribosyl)imidazole + ADP + phosphate + H(+). It participates in purine metabolism; IMP biosynthesis via de novo pathway; 5-amino-1-(5-phospho-D-ribosyl)imidazole from N(2)-formyl-N(1)-(5-phospho-D-ribosyl)glycinamide: step 2/2. The protein operates within purine metabolism; IMP biosynthesis via de novo pathway; N(1)-(5-phospho-D-ribosyl)glycinamide from 5-phospho-alpha-D-ribose 1-diphosphate: step 2/2. Its function is as follows. Catalyzes the second and fifth step in the 'de novo' purine biosynthesis pathway; contains phosphoribosylamine--glycine ligase (GARS) and phosphoribosylformylglycinamidine cyclo-ligase (AIRS) activities. The polypeptide is Bifunctional purine biosynthetic protein ADE5,7 (Saccharomyces cerevisiae (strain ATCC 204508 / S288c) (Baker's yeast)).